Here is a 351-residue protein sequence, read N- to C-terminus: Protein-glutamate methylesterase/protein-glutamine glutaminase 2 (351 aa).

The 118-residue stretch at 4 to 121 (KVLVVDDSTL…PQGFNEYQDL (118 aa)) folds into the Response regulatory domain. Position 55 is a 4-aspartylphosphate (Asp-55). The region spanning 156-348 (RTVNTQLVAI…DKLLQYLASV (193 aa)) is the CheB-type methylesterase domain. Catalysis depends on residues Ser-168, His-194, and Asp-290.

Belongs to the CheB family. Post-translationally, phosphorylated by CheA. Phosphorylation of the N-terminal regulatory domain activates the methylesterase activity.

It localises to the cytoplasm. The enzyme catalyses [protein]-L-glutamate 5-O-methyl ester + H2O = L-glutamyl-[protein] + methanol + H(+). It catalyses the reaction L-glutaminyl-[protein] + H2O = L-glutamyl-[protein] + NH4(+). Its function is as follows. Involved in chemotaxis. Part of a chemotaxis signal transduction system that modulates chemotaxis in response to various stimuli. Catalyzes the demethylation of specific methylglutamate residues introduced into the chemoreceptors (methyl-accepting chemotaxis proteins or MCP) by CheR. Also mediates the irreversible deamidation of specific glutamine residues to glutamic acid. This Shewanella oneidensis (strain ATCC 700550 / JCM 31522 / CIP 106686 / LMG 19005 / NCIMB 14063 / MR-1) protein is Protein-glutamate methylesterase/protein-glutamine glutaminase 2.